A 97-amino-acid chain; its full sequence is Integration host factor subunit alpha (97 aa).

Belongs to the bacterial histone-like protein family. In terms of assembly, heterodimer of an alpha and a beta chain.

This protein is one of the two subunits of integration host factor, a specific DNA-binding protein that functions in genetic recombination as well as in transcriptional and translational control. This Histophilus somni (strain 2336) (Haemophilus somnus) protein is Integration host factor subunit alpha.